A 240-amino-acid polypeptide reads, in one-letter code: Purine nucleoside phosphorylase DeoD-type (240 aa).

His5 contacts a purine D-ribonucleoside. Phosphate-binding positions include Gly21, Arg25, Arg44, and 88–91 (RVGS). A purine D-ribonucleoside is bound by residues 181–183 (EME) and 205–206 (SD). The active-site Proton donor is the Asp206.

It belongs to the PNP/UDP phosphorylase family. Homohexamer; trimer of homodimers.

It carries out the reaction a purine D-ribonucleoside + phosphate = a purine nucleobase + alpha-D-ribose 1-phosphate. It catalyses the reaction a purine 2'-deoxy-D-ribonucleoside + phosphate = a purine nucleobase + 2-deoxy-alpha-D-ribose 1-phosphate. In terms of biological role, catalyzes the reversible phosphorolytic breakdown of the N-glycosidic bond in the beta-(deoxy)ribonucleoside molecules, with the formation of the corresponding free purine bases and pentose-1-phosphate. The sequence is that of Purine nucleoside phosphorylase DeoD-type from Enterobacter sp. (strain 638).